We begin with the raw amino-acid sequence, 401 residues long: Bifunctional sugar-1-phosphate nucleotidylyltransferase/acetyltransferase (401 aa).

The tract at residues Met-1–Lys-220 is nucleotidylyltransferase. Residues Ala-8–Arg-13, Gln-73, and Gly-79 contribute to the a ribonucleoside 5'-triphosphate site. Residues Thr-80, Tyr-97, Gly-131, Glu-146, and Asn-157 each contribute to the N-acetyl-alpha-D-glucosamine 1-phosphate site. An acetyltransferase region spans residues Glu-236–Val-401.

In the N-terminal section; belongs to the N-acetylglucosamine-1-phosphate uridyltransferase family. This sequence in the C-terminal section; belongs to the transferase hexapeptide repeat family. In terms of assembly, homotrimer. The cofactor is Co(2+). Mn(2+) serves as cofactor.

It catalyses the reaction dTTP + alpha-D-glucose 1-phosphate + H(+) = dTDP-alpha-D-glucose + diphosphate. The catalysed reaction is alpha-D-glucose 1-phosphate + UTP + H(+) = UDP-alpha-D-glucose + diphosphate. The enzyme catalyses N-acetyl-alpha-D-galactosamine 1-phosphate + UTP + H(+) = UDP-N-acetyl-alpha-D-galactosamine + diphosphate. It carries out the reaction N-acetyl-alpha-D-glucosamine 1-phosphate + UTP + H(+) = UDP-N-acetyl-alpha-D-glucosamine + diphosphate. It catalyses the reaction alpha-D-galactosamine 1-phosphate + acetyl-CoA = N-acetyl-alpha-D-galactosamine 1-phosphate + CoA + H(+). The catalysed reaction is alpha-D-glucosamine 1-phosphate + acetyl-CoA = N-acetyl-alpha-D-glucosamine 1-phosphate + CoA + H(+). The protein operates within nucleotide-sugar biosynthesis; UDP-N-acetyl-alpha-D-glucosamine biosynthesis; N-acetyl-alpha-D-glucosamine 1-phosphate from alpha-D-glucosamine 6-phosphate (route II): step 2/2. It functions in the pathway nucleotide-sugar biosynthesis; UDP-N-acetyl-alpha-D-glucosamine biosynthesis; UDP-N-acetyl-alpha-D-glucosamine from N-acetyl-alpha-D-glucosamine 1-phosphate: step 1/1. GlcN-1-P acetyltransferase activity is inhibited by divalent cations. GalN-1-P acetyltransferase activity is enhanced by Co(2+), Mg(2+) and Ca(2+), but inhibited by Zn(2+) or Mn(2+). Bifunctional enzyme involved in the synthesis of UDP-N-acetylglucosamine (UDP-GlcNAc) and UDP-N-acetylgalactosamine (UDP-GalNAc). It has multiple amino-sugar-1-phosphate acetyltransferase activities, including glucosamine-1-phosphate (GlcN-1-P) acetyltransferase and galactosamine-1-phosphate (GalN-1-P) acetyltransferase activities, and multiple sugar-1-phosphate nucleotidylyltransferase activities, including N-acetylglucosamine-1-phosphate (GlcNAc-1-P) uridyltransferase and N-acetylgalactosamine-1-phosphate (GalNAc-1-P) uridyltransferase activities. Also catalyzes the formation of dTDP-glucose from dTTP and glucose-1-phosphate (Glc-1-P), and the reverse reaction, which produces dTTP from dTDP-glucose and diphosphate. Can also catalyze the formation of UDP-glucose from UTP and glucose-1-phosphate. This is Bifunctional sugar-1-phosphate nucleotidylyltransferase/acetyltransferase from Sulfurisphaera tokodaii (strain DSM 16993 / JCM 10545 / NBRC 100140 / 7) (Sulfolobus tokodaii).